The sequence spans 188 residues: Oleosin S2-2 (188 aa).

An N-acetylalanine modification is found at Ala2. Residues 2–51 (ATVERRVQVDPTDKRIHLQPQYEGDVGYGYGYGGRADYKSSGPSSNQIVA) form a polar region. The next 3 helical transmembrane spans lie at 49–69 (IVALIVGVPVGGSLLALAGLT), 74–94 (VIGLMLSVPLFLLFSPVIVPA), and 96–116 (ITIGLAVTAILASGLFGLTGL). The tract at residues 52 to 125 (LIVGVPVGGS…LSSVSWVLNY (74 aa)) is hydrophobic. Positions 164–188 (DKAHEAHDTSLTTETTEPGKTRRHT) are disordered. Polar residues predominate over residues 172–181 (TSLTTETTEP).

It belongs to the oleosin family.

The protein localises to the lipid droplet. It is found in the membrane. In terms of biological role, may have a structural role to stabilize the lipid body during desiccation of the seed by preventing coalescence of the oil. Probably interacts with both lipid and phospholipid moieties of lipid bodies. May also provide recognition signals for specific lipase anchorage in lipolysis during seedling growth. The chain is Oleosin S2-2 (S2) from Brassica napus (Rape).